The following is a 336-amino-acid chain: Alcohol dehydrogenase (336 aa).

Residues C37, H58, C89, C92, C95, C103, and C145 each coordinate Zn(2+).

This sequence belongs to the zinc-containing alcohol dehydrogenase family. Requires Zn(2+) as cofactor.

The catalysed reaction is a primary alcohol + NAD(+) = an aldehyde + NADH + H(+). It catalyses the reaction a secondary alcohol + NAD(+) = a ketone + NADH + H(+). This is Alcohol dehydrogenase (adh) from Staphylococcus aureus (strain Mu50 / ATCC 700699).